Consider the following 602-residue polypeptide: MQIHRLSPQLINQIAAGEVVERPASVVKELIENSLDAGATRIDIEVELGGAKVIRIRDNGYGISKKDIVLAVARHTTSKISSIEDLECIKSMGFRGEALASISSVAHLNLTSRTAKQNEAWQVYTERYTEKVMLLPIAHPVGTTVEVLDLFYNTPARRKFMRAEQTEFKHIEEVIRRMALARFDVTFILQHNNKIVQHYRAVKEPSQYWRRLSRLCGNTFVNNALKISWQNIDFSIQGWVEDPSCIKLPEMQYSYVNQRIIRNKLINHAIRHAYQDQLKGPHQPSFVIFIVINPQQLDINVHPAKKEIKFYEARKVHHFIYQALMTVLQQRVKLSSDTCYSTTQKPIGKIIPSHALNQLNEGKNNILVSYSAAAKNADELLSNQIIQDPDEAKMQDIPAKCQATKNSCSTSLSNDFYSFGKMLTFCSPCYALLESAQGLSLLSLQFAERYITERQLTPENNSDTILAQPLLIPLRIILSNGEASALHQHRLLLQRMGILLQPNENETILNAVPLPLLRKKNLSNLILDLLRYLNNETSVTYHKIASWLACSLNSQITTWNYSRAIPLIAEVERLCPHWIKNPPNALIVKLDLKMAIKALNNS.

Belongs to the DNA mismatch repair MutL/HexB family.

Its function is as follows. This protein is involved in the repair of mismatches in DNA. It is required for dam-dependent methyl-directed DNA mismatch repair. May act as a 'molecular matchmaker', a protein that promotes the formation of a stable complex between two or more DNA-binding proteins in an ATP-dependent manner without itself being part of a final effector complex. In Baumannia cicadellinicola subsp. Homalodisca coagulata, this protein is DNA mismatch repair protein MutL.